Reading from the N-terminus, the 735-residue chain is FHF complex subunit HOOK-interacting protein 2B (735 aa).

The segment at 183-229 (SSSTSDEAAEKDCSGSSSPERASSPSSSSSACSLLSRSGAHPVSSPQ) is disordered. Low complexity predominate over residues 196-221 (SGSSSPERASSPSSSSSACSLLSRSG).

The protein belongs to the FHIP family.

This chain is FHF complex subunit HOOK-interacting protein 2B (fhip2b), found in Danio rerio (Zebrafish).